The primary structure comprises 468 residues: 3-isopropylmalate dehydratase large subunit (468 aa).

[4Fe-4S] cluster is bound by residues cysteine 349, cysteine 409, and cysteine 412.

It belongs to the aconitase/IPM isomerase family. LeuC type 1 subfamily. As to quaternary structure, heterodimer of LeuC and LeuD. The cofactor is [4Fe-4S] cluster.

The enzyme catalyses (2R,3S)-3-isopropylmalate = (2S)-2-isopropylmalate. It participates in amino-acid biosynthesis; L-leucine biosynthesis; L-leucine from 3-methyl-2-oxobutanoate: step 2/4. Its function is as follows. Catalyzes the isomerization between 2-isopropylmalate and 3-isopropylmalate, via the formation of 2-isopropylmaleate. In Shewanella baltica (strain OS185), this protein is 3-isopropylmalate dehydratase large subunit.